A 166-amino-acid chain; its full sequence is Photosystem I assembly protein Ycf3 (166 aa).

TPR repeat units lie at residues 35–68 (AFTY…EIDP), 72–105 (SYIL…NPSL), and 120–153 (GEQA…APTN).

Belongs to the Ycf3 family.

It localises to the plastid. It is found in the chloroplast thylakoid membrane. Functionally, essential for the assembly of the photosystem I (PSI) complex. May act as a chaperone-like factor to guide the assembly of the PSI subunits. The sequence is that of Photosystem I assembly protein Ycf3 from Oltmannsiellopsis viridis (Marine flagellate).